The following is a 528-amino-acid chain: Probable serine protease HtrA1 (528 aa).

The disordered stretch occupies residues 1-70 (MDTRVDTDNA…RPSGVQGSFV (70 aa)). The Cytoplasmic segment spans residues 1-178 (MDTRVDTDNA…DVLFGGKVSY (178 aa)). Residues 31–40 (NNGGPNGGGR) are compositionally biased toward gly residues. The chain crosses the membrane as a helical span at residues 179–199 (LALGILVAIALVIGGIGGVIG). Topologically, residues 200-528 (RKTAEVVDAF…LTVKPDPDST (329 aa)) are periplasmic. Catalysis depends on charge relay system residues His270, Asp306, and Ser387. The region spanning 426–487 (LVANSLIKDG…VIVKVGNRAV (62 aa)) is the PDZ domain.

The protein belongs to the peptidase S1C family. As to quaternary structure, the C-terminal region exhibits both monomeric and trimeric forms in solution.

It is found in the cell inner membrane. It catalyses the reaction Acts on substrates that are at least partially unfolded. The cleavage site P1 residue is normally between a pair of hydrophobic residues, such as Val-|-Val.. In terms of biological role, essential protein that may act as a regulatory protease that is conditionally activated upon appropriate environmental triggers. This Mycobacterium tuberculosis (strain ATCC 25618 / H37Rv) protein is Probable serine protease HtrA1.